Here is a 174-residue protein sequence, read N- to C-terminus: Protein SHI RELATED SEQUENCE 3 (174 aa).

Positions 9, 12, 20, 25, 29, and 36 each coordinate Zn(2+). Positions 9–36 form a DNA-binding region, zn(2)-C6 fungal-type; degenerate; sequence CEDCGNQAKKDCVYMRCRTCCKSKAFHC. A Required for homo- and heterodimerization motif is present at residues 110-113; it reads IGGH.

This sequence belongs to the SHI protein family.

The protein resides in the nucleus. Its function is as follows. Transcription activator that binds DNA on 5'-ACTCTAC-3' and promotes auxin homeostasis-regulating gene expression (e.g. YUC genes), as well as genes affecting stamen development, cell expansion and timing of flowering. Synergistically with other SHI-related proteins, regulates gynoecium, stamen and leaf development in a dose-dependent manner, controlling apical-basal patterning. Promotes style and stigma formation, and influences vascular development during gynoecium development. May also have a role in the formation and/or maintenance of the shoot apical meristem (SAM). The protein is Protein SHI RELATED SEQUENCE 3 (SRS3) of Arabidopsis thaliana (Mouse-ear cress).